Reading from the N-terminus, the 488-residue chain is Altronate oxidoreductase (488 aa).

18 to 29 serves as a coordination point for NAD(+); sequence VIQFGEGNFLRA.

It belongs to the mannitol dehydrogenase family. UxaB subfamily.

It carries out the reaction D-altronate + NAD(+) = keto-D-tagaturonate + NADH + H(+). Its pathway is carbohydrate metabolism; pentose and glucuronate interconversion. In Pectobacterium carotovorum subsp. carotovorum (strain PC1), this protein is Altronate oxidoreductase.